The sequence spans 646 residues: Threonine--tRNA ligase (646 aa).

The 63-residue stretch at 1–63 (MADLSIIFPD…SSGGSIEIIT (63 aa)) folds into the TGS domain. The tract at residues 244–541 (DHRKLGKELG…LIEEYKGAFP (298 aa)) is catalytic. Residues Cys337, His388, and His518 each contribute to the Zn(2+) site.

It belongs to the class-II aminoacyl-tRNA synthetase family. As to quaternary structure, homodimer. It depends on Zn(2+) as a cofactor.

It localises to the cytoplasm. The enzyme catalyses tRNA(Thr) + L-threonine + ATP = L-threonyl-tRNA(Thr) + AMP + diphosphate + H(+). Catalyzes the attachment of threonine to tRNA(Thr) in a two-step reaction: L-threonine is first activated by ATP to form Thr-AMP and then transferred to the acceptor end of tRNA(Thr). Also edits incorrectly charged L-seryl-tRNA(Thr). The sequence is that of Threonine--tRNA ligase from Oceanobacillus iheyensis (strain DSM 14371 / CIP 107618 / JCM 11309 / KCTC 3954 / HTE831).